The chain runs to 205 residues: Small ribosomal subunit protein uS4 (205 aa).

The 64-residue stretch at 94 to 157 (SRLDTVVYRM…KQIALIQESI (64 aa)) folds into the S4 RNA-binding domain.

Belongs to the universal ribosomal protein uS4 family. As to quaternary structure, part of the 30S ribosomal subunit. Contacts protein S5. The interaction surface between S4 and S5 is involved in control of translational fidelity.

One of the primary rRNA binding proteins, it binds directly to 16S rRNA where it nucleates assembly of the body of the 30S subunit. Functionally, with S5 and S12 plays an important role in translational accuracy. This Rickettsia canadensis (strain McKiel) protein is Small ribosomal subunit protein uS4.